The primary structure comprises 101 residues: NADH-quinone oxidoreductase subunit K (101 aa).

Transmembrane regions (helical) follow at residues 4–24 (LADY…GIFI), 30–50 (LVLL…FIAF), and 61–81 (VFVF…LAIV).

This sequence belongs to the complex I subunit 4L family. As to quaternary structure, NDH-1 is composed of 14 different subunits. Subunits NuoA, H, J, K, L, M, N constitute the membrane sector of the complex.

The protein resides in the cell inner membrane. It catalyses the reaction a quinone + NADH + 5 H(+)(in) = a quinol + NAD(+) + 4 H(+)(out). Functionally, NDH-1 shuttles electrons from NADH, via FMN and iron-sulfur (Fe-S) centers, to quinones in the respiratory chain. The immediate electron acceptor for the enzyme in this species is believed to be ubiquinone. Couples the redox reaction to proton translocation (for every two electrons transferred, four hydrogen ions are translocated across the cytoplasmic membrane), and thus conserves the redox energy in a proton gradient. The sequence is that of NADH-quinone oxidoreductase subunit K from Alkalilimnicola ehrlichii (strain ATCC BAA-1101 / DSM 17681 / MLHE-1).